A 111-amino-acid polypeptide reads, in one-letter code: Large ribosomal subunit protein eL33x (111 aa).

This sequence belongs to the eukaryotic ribosomal protein eL33 family.

The sequence is that of Large ribosomal subunit protein eL33x (RPL35AD) from Arabidopsis thaliana (Mouse-ear cress).